A 427-amino-acid chain; its full sequence is 3-phosphoshikimate 1-carboxyvinyltransferase (427 aa).

3 residues coordinate 3-phosphoshikimate: Lys20, Ser21, and Arg25. Lys20 lines the phosphoenolpyruvate pocket. Residues Gly92 and Arg120 each contribute to the phosphoenolpyruvate site. The 3-phosphoshikimate site is built by Ser166, Gln168, Asp312, and Lys339. Gln168 is a phosphoenolpyruvate binding site. The Proton acceptor role is filled by Asp312. Positions 343 and 385 each coordinate phosphoenolpyruvate.

This sequence belongs to the EPSP synthase family. As to quaternary structure, monomer.

The protein resides in the cytoplasm. It carries out the reaction 3-phosphoshikimate + phosphoenolpyruvate = 5-O-(1-carboxyvinyl)-3-phosphoshikimate + phosphate. It functions in the pathway metabolic intermediate biosynthesis; chorismate biosynthesis; chorismate from D-erythrose 4-phosphate and phosphoenolpyruvate: step 6/7. Catalyzes the transfer of the enolpyruvyl moiety of phosphoenolpyruvate (PEP) to the 5-hydroxyl of shikimate-3-phosphate (S3P) to produce enolpyruvyl shikimate-3-phosphate and inorganic phosphate. The protein is 3-phosphoshikimate 1-carboxyvinyltransferase of Streptococcus pneumoniae serotype 2 (strain D39 / NCTC 7466).